Here is a 922-residue protein sequence, read N- to C-terminus: Putative ATP-dependent helicase/translocase YwqA (922 aa).

In terms of domain architecture, Helicase ATP-binding spans 462–625; that stretch reads LFLRESGFGA…WSIFDFMNKG (164 aa). ATP is bound at residue 475 to 482; the sequence is DDMGLGKT. The DEAQ box signature appears at 576 to 579; that stretch reads DEAQ. The 155-residue stretch at 753 to 907 folds into the Helicase C-terminal domain; that stretch reads KLLELMTAIR…QSENWITELS (155 aa).

It belongs to the SNF2/RAD54 helicase family. As to quaternary structure, interacts with the RNA polymerase core.

In Bacillus subtilis (strain 168), this protein is Putative ATP-dependent helicase/translocase YwqA (ywqA).